The following is a 297-amino-acid chain: Cytidine deaminase (297 aa).

2 consecutive CMP/dCMP-type deaminase domains span residues 50–170 (SDKE…FGPK) and 189–297 (ETES…YASL). 91–93 (NME) contacts substrate. Residue His-104 coordinates Zn(2+). The active-site Proton donor is Glu-106. Positions 131 and 134 each coordinate Zn(2+).

It belongs to the cytidine and deoxycytidylate deaminase family. As to quaternary structure, homodimer. It depends on Zn(2+) as a cofactor.

It catalyses the reaction cytidine + H2O + H(+) = uridine + NH4(+). The enzyme catalyses 2'-deoxycytidine + H2O + H(+) = 2'-deoxyuridine + NH4(+). Its function is as follows. This enzyme scavenges exogenous and endogenous cytidine and 2'-deoxycytidine for UMP synthesis. In Aliivibrio fischeri (strain ATCC 700601 / ES114) (Vibrio fischeri), this protein is Cytidine deaminase.